Reading from the N-terminus, the 107-residue chain is Toxin MT2730 (107 aa).

The segment at 1-42 (MTHKRTKRQPAIAAGLNAPRRNRVGRQHGWPADVPSAEQRRA) is disordered.

Toxic component of a type II toxin-antitoxin (TA) system. Its toxic effect is neutralized by coexpression with cognate antitoxin MT2731. The protein is Toxin MT2730 of Mycobacterium tuberculosis (strain CDC 1551 / Oshkosh).